Consider the following 287-residue polypeptide: Elongation factor Ts (287 aa).

Residues 80-83 (TDFL) form an involved in Mg(2+) ion dislocation from EF-Tu region.

Belongs to the EF-Ts family.

The protein localises to the cytoplasm. In terms of biological role, associates with the EF-Tu.GDP complex and induces the exchange of GDP to GTP. It remains bound to the aminoacyl-tRNA.EF-Tu.GTP complex up to the GTP hydrolysis stage on the ribosome. This is Elongation factor Ts from Pseudomonas putida (strain W619).